Consider the following 409-residue polypeptide: 2-methylfumaryl-CoA isomerase (409 aa).

D165 acts as the Nucleophile in catalysis.

The protein belongs to the CoA-transferase III family. Mesaconyl-CoA isomerase subfamily. Homodimer.

The enzyme catalyses 2-methylfumaryl-CoA = 3-methylfumaryl-CoA. With respect to regulation, partially inhibited by hydroxylamine. Functionally, involved in the glyoxylate assimilation cycle used to regenerate acetyl-CoA and produce pyruvate as universal precursor for biosynthesis. This reaction involves an intramolecular CoA transferase that catalyzes the reversible transfer of the CoA moiety from the C1-carboxyl group of mesaconyl-CoA to the C4-carboxyl group. It does not require free mesaconate as CoA acceptor. The chain is 2-methylfumaryl-CoA isomerase (mct) from Chloroflexus aurantiacus (strain ATCC 29366 / DSM 635 / J-10-fl).